The chain runs to 323 residues: Acetyl-coenzyme A carboxylase carboxyl transferase subunit alpha (323 aa).

Residues 39-293 (RLSKKSQQLT…RRALADSLRQ (255 aa)) enclose the CoA carboxyltransferase C-terminal domain.

It belongs to the AccA family. As to quaternary structure, acetyl-CoA carboxylase is a heterohexamer composed of biotin carboxyl carrier protein (AccB), biotin carboxylase (AccC) and two subunits each of ACCase subunit alpha (AccA) and ACCase subunit beta (AccD).

Its subcellular location is the cytoplasm. The catalysed reaction is N(6)-carboxybiotinyl-L-lysyl-[protein] + acetyl-CoA = N(6)-biotinyl-L-lysyl-[protein] + malonyl-CoA. Its pathway is lipid metabolism; malonyl-CoA biosynthesis; malonyl-CoA from acetyl-CoA: step 1/1. In terms of biological role, component of the acetyl coenzyme A carboxylase (ACC) complex. First, biotin carboxylase catalyzes the carboxylation of biotin on its carrier protein (BCCP) and then the CO(2) group is transferred by the carboxyltransferase to acetyl-CoA to form malonyl-CoA. The protein is Acetyl-coenzyme A carboxylase carboxyl transferase subunit alpha of Burkholderia orbicola (strain AU 1054).